The primary structure comprises 72 residues: MIIPVRCFSCGRVIASDYGRYLRRINEIRSEGREPTAEEIEKIFDDLGVERYCCRRMIISHVDLINEIMPFS.

Zn(2+)-binding residues include C7, C10, C53, and C54.

Belongs to the archaeal Rpo10/eukaryotic RPB10 RNA polymerase subunit family. In terms of assembly, part of the RNA polymerase complex. Requires Zn(2+) as cofactor.

The protein resides in the cytoplasm. The catalysed reaction is RNA(n) + a ribonucleoside 5'-triphosphate = RNA(n+1) + diphosphate. Its function is as follows. DNA-dependent RNA polymerase (RNAP) catalyzes the transcription of DNA into RNA using the four ribonucleoside triphosphates as substrates. This chain is DNA-directed RNA polymerase subunit Rpo10, found in Thermoplasma volcanium (strain ATCC 51530 / DSM 4299 / JCM 9571 / NBRC 15438 / GSS1).